A 44-amino-acid chain; its full sequence is Defensin heliomicin (44 aa).

3 disulfides stabilise this stretch: C7–C32, C18–C40, and C22–C42.

Its subcellular location is the secreted. Its function is as follows. This peptide has potent anti-fungal activity. Has no activity against Gram-negative and Gram-positive bacteria. The sequence is that of Defensin heliomicin from Heliothis virescens (Tobacco budworm moth).